The sequence spans 575 residues: Acetylcholine receptor subunit beta-type acr-2 (575 aa).

The N-terminal stretch at 1–20 is a signal peptide; the sequence is MKKTVKILLILITVFLKVHC. The Extracellular segment spans residues 21 to 270; it reads NGGHDDEAAD…IRRKTLFYTV (250 aa). The segment at 31–57 is disordered; it reads FLSHTNIDDPNNSSDPNKNSDQGDTMG. Over residues 38 to 50 the composition is skewed to low complexity; it reads DDPNNSSDPNKNS. N-linked (GlcNAc...) asparagine glycans are attached at residues Asn41, Asn42, Asn80, and Asn131. Residues Cys185 and Cys199 are joined by a disulfide bond. 3 consecutive transmembrane segments (helical) span residues 271–291, 299–319, and 331–351; these read ILII…YLPV, LTIS…KILP, and LLLA…IVNI. Residues 352 to 527 lie on the Cytoplasmic side of the membrane; it reads YFRSALSHKM…WKYVAMVLDR (176 aa). Residues 528-548 traverse the membrane as a helical segment; the sequence is LILLIFFGVTLGGTLGIICSA.

Belongs to the ligand-gated ion channel (TC 1.A.9) family. Acetylcholine receptor (TC 1.A.9.1) subfamily. In terms of assembly, component of nicotinic acetylcholine receptor. In cholinergic motoneurons, composed of 2 non-alpha subunits acr-2 and acr-3, and 3 alpha subunits unc-38, unc-63 and acr-12. As to expression, specifically expressed in cholinergic ventral cord motoneurons of the VA, VB, DA and DB classes but not AS and VC classes. Expressed in PVQ and DVC neurons in the tail.

The protein resides in the postsynaptic cell membrane. Its subcellular location is the cell membrane. In terms of biological role, non-alpha subunit of nicotinic acetylcholine receptor (nAChR). Acts in cholinergic motoneurons to regulate presynaptic neurotransmitter release, thereby ensuring normal level of excitation of cholinergic motoneurons during locomotion. This chain is Acetylcholine receptor subunit beta-type acr-2 (acr-2), found in Caenorhabditis elegans.